We begin with the raw amino-acid sequence, 64 residues long: Protein sigN173 (64 aa).

The chain is Protein sigN173 from Dictyostelium discoideum (Social amoeba).